Consider the following 277-residue polypeptide: Large ribosomal subunit protein uL2 (277 aa).

Positions 215 to 277 are disordered; it reads GIRPTVRGSV…KLIVKRRNDK (63 aa). Positions 264–277 are enriched in basic and acidic residues; sequence KYSDKLIVKRRNDK.

This sequence belongs to the universal ribosomal protein uL2 family. In terms of assembly, part of the 50S ribosomal subunit. Forms a bridge to the 30S subunit in the 70S ribosome.

In terms of biological role, one of the primary rRNA binding proteins. Required for association of the 30S and 50S subunits to form the 70S ribosome, for tRNA binding and peptide bond formation. It has been suggested to have peptidyltransferase activity; this is somewhat controversial. Makes several contacts with the 16S rRNA in the 70S ribosome. The chain is Large ribosomal subunit protein uL2 from Clostridium acetobutylicum (strain ATCC 824 / DSM 792 / JCM 1419 / IAM 19013 / LMG 5710 / NBRC 13948 / NRRL B-527 / VKM B-1787 / 2291 / W).